Reading from the N-terminus, the 130-residue chain is Holo-[acyl-carrier-protein] synthase (130 aa).

The Mg(2+) site is built by Asp9 and Glu58.

Belongs to the P-Pant transferase superfamily. AcpS family. Mg(2+) serves as cofactor.

The protein localises to the cytoplasm. The catalysed reaction is apo-[ACP] + CoA = holo-[ACP] + adenosine 3',5'-bisphosphate + H(+). Transfers the 4'-phosphopantetheine moiety from coenzyme A to a Ser of acyl-carrier-protein. The polypeptide is Holo-[acyl-carrier-protein] synthase (Mycobacterium bovis (strain ATCC BAA-935 / AF2122/97)).